Consider the following 570-residue polypeptide: Pleckstrin homology domain-containing family D member 1 (570 aa).

A compositionally biased stretch (basic and acidic residues) spans 1 to 13; sequence MTTKTTPKELKAK. The segment at 1–42 is disordered; that stretch reads MTTKTTPKELKAKKESKKKGSAPEPPKNGPPRTSPPNTIEKK. Positions 23–34 are enriched in pro residues; it reads PEPPKNGPPRTS. Positions 83-192 constitute a PH domain; the sequence is GVQNYGILMK…WLKALRSATK (110 aa). A coiled-coil region spans residues 202–448; sequence ETMIRELENR…TGAQMTELQE (247 aa). Residues 542-551 show a composition bias toward basic residues; sequence SKRGIRSSFR. The interval 542–570 is disordered; sequence SKRGIRSSFRKKTDSITTQPREKEPLMQL. Residues 561-570 are compositionally biased toward basic and acidic residues; the sequence is PREKEPLMQL.

Belongs to the PLEKHD1 family.

The polypeptide is Pleckstrin homology domain-containing family D member 1 (Caenorhabditis elegans).